A 169-amino-acid chain; its full sequence is ATP synthase subunit b (169 aa).

The chain crosses the membrane as a helical span at residues 11–31; sequence KLPLGNMLFIIISFLVLMVIL.

This sequence belongs to the ATPase B chain family. In terms of assembly, F-type ATPases have 2 components, F(1) - the catalytic core - and F(0) - the membrane proton channel. F(1) has five subunits: alpha(3), beta(3), gamma(1), delta(1), epsilon(1). F(0) has three main subunits: a(1), b(2) and c(10-14). The alpha and beta chains form an alternating ring which encloses part of the gamma chain. F(1) is attached to F(0) by a central stalk formed by the gamma and epsilon chains, while a peripheral stalk is formed by the delta and b chains.

Its subcellular location is the cell membrane. Functionally, f(1)F(0) ATP synthase produces ATP from ADP in the presence of a proton or sodium gradient. F-type ATPases consist of two structural domains, F(1) containing the extramembraneous catalytic core and F(0) containing the membrane proton channel, linked together by a central stalk and a peripheral stalk. During catalysis, ATP synthesis in the catalytic domain of F(1) is coupled via a rotary mechanism of the central stalk subunits to proton translocation. In terms of biological role, component of the F(0) channel, it forms part of the peripheral stalk, linking F(1) to F(0). The polypeptide is ATP synthase subunit b (Leuconostoc citreum (strain KM20)).